We begin with the raw amino-acid sequence, 134 residues long: Holo-[acyl-carrier-protein] synthase (134 aa).

Mg(2+) contacts are provided by D8 and E57.

The protein belongs to the P-Pant transferase superfamily. AcpS family. Requires Mg(2+) as cofactor.

It is found in the cytoplasm. It carries out the reaction apo-[ACP] + CoA = holo-[ACP] + adenosine 3',5'-bisphosphate + H(+). Its function is as follows. Transfers the 4'-phosphopantetheine moiety from coenzyme A to a Ser of acyl-carrier-protein. This chain is Holo-[acyl-carrier-protein] synthase, found in Rhizobium rhizogenes (strain K84 / ATCC BAA-868) (Agrobacterium radiobacter).